The chain runs to 535 residues: Sodium channel protein Nach (535 aa).

Residues 1 to 49 lie on the Cytoplasmic side of the membrane; that stretch reads MGHQEELKPEQVDLKVTPFVGYLRRTWSDFCATSSIHGLKYTRDEDTNK. A helical transmembrane segment spans residues 50 to 70; the sequence is IVHLVWLLISVVMFICAVVMA. Over 71 to 471 the chain is Extracellular; it reads RTFYMDYRSS…LVSNLGSAFS (401 aa). 3 N-linked (GlcNAc...) asparagine glycosylation sites follow: N165, N239, and N367. The helical transmembrane segment at 472–492 threads the bilayer; that stretch reads LFVGMSMLSVVEIIYYFSVIL. At 493–535 the chain is on the cytoplasmic side; it reads RKNYKLECETRSQMLHKKPKFAWPKANDTHSKEQKSVFIIHKS.

The protein belongs to the amiloride-sensitive sodium channel (TC 1.A.6) family. Embryonic and larval tracheal system; dorsal trunk (but not at fusion with transverse connective), several branches and terminal cells. Also expressed in adult tracheal system; dorsal trunk, but not at the spiracles.

It localises to the membrane. Functionally, part of a complex that plays a role in tracheal liquid clearance. Probable role in sodium transport. The sequence is that of Sodium channel protein Nach (Nach) from Drosophila melanogaster (Fruit fly).